Reading from the N-terminus, the 231-residue chain is Small ribosomal subunit protein uS3 (231 aa).

The KH type-2 domain maps to 38 to 106 (IRVYLKNRLK…KTFVNIMEIK (69 aa)).

It belongs to the universal ribosomal protein uS3 family. As to quaternary structure, part of the 30S ribosomal subunit. Forms a tight complex with proteins S10 and S14.

Binds the lower part of the 30S subunit head. Binds mRNA in the 70S ribosome, positioning it for translation. This Endomicrobium trichonymphae protein is Small ribosomal subunit protein uS3.